The following is a 691-amino-acid chain: Choline transporter-like 1 (691 aa).

The span at 1–10 (MGCAESKDGE) shows a compositional bias: basic and acidic residues. The tract at residues 1 to 20 (MGCAESKDGEGEAQNNRPKY) is disordered. A run of 3 helical transmembrane segments spans residues 28–48 (WLAIYIIFWLFLIVIAIFSFV), 205–225 (WHIIAMVCGLALLISIALVTM), and 232–252 (IVSWIICVLVIVASVALTVAL). N-linked (GlcNAc...) asparagine glycosylation is present at Asn261. Transmembrane regions (helical) follow at residues 282–302 (VLTLAVLATITMIILIVVIYF) and 332–352 (LLAFLVLIAFLSFWVAVIICL). Asn385 carries an N-linked (GlcNAc...) asparagine glycan. Transmembrane regions (helical) follow at residues 408 to 428 (SMFWIYVVGLIWTVEFIFACQ), 527 to 547 (VVAIESINFCPAAGIAWNAMA), 562 to 582 (FILFLGKVVVAALSGLIGIVL), and 591 to 611 (FYMAPVIIIIIFSFFIAHIIL).

Belongs to the CTL (choline transporter-like) family.

It is found in the membrane. In Drosophila melanogaster (Fruit fly), this protein is Choline transporter-like 1.